Here is a 121-residue protein sequence, read N- to C-terminus: Aspartate 1-decarboxylase (121 aa).

Ser25 functions as the Schiff-base intermediate with substrate; via pyruvic acid in the catalytic mechanism. At Ser25 the chain carries Pyruvic acid (Ser). Substrate is bound at residue Thr57. Catalysis depends on Tyr58, which acts as the Proton donor. 73 to 75 (GAA) is a substrate binding site.

Belongs to the PanD family. Heterooctamer of four alpha and four beta subunits. The cofactor is pyruvate. In terms of processing, is synthesized initially as an inactive proenzyme, which is activated by self-cleavage at a specific serine bond to produce a beta-subunit with a hydroxyl group at its C-terminus and an alpha-subunit with a pyruvoyl group at its N-terminus.

It localises to the cytoplasm. It carries out the reaction L-aspartate + H(+) = beta-alanine + CO2. It participates in cofactor biosynthesis; (R)-pantothenate biosynthesis; beta-alanine from L-aspartate: step 1/1. Catalyzes the pyruvoyl-dependent decarboxylation of aspartate to produce beta-alanine. This is Aspartate 1-decarboxylase from Wolinella succinogenes (strain ATCC 29543 / DSM 1740 / CCUG 13145 / JCM 31913 / LMG 7466 / NCTC 11488 / FDC 602W) (Vibrio succinogenes).